Reading from the N-terminus, the 234-residue chain is Ubiquinone biosynthesis O-methyltransferase (234 aa).

S-adenosyl-L-methionine-binding residues include arginine 39, glycine 59, aspartate 80, and methionine 124.

The protein belongs to the methyltransferase superfamily. UbiG/COQ3 family.

The enzyme catalyses a 3-demethylubiquinol + S-adenosyl-L-methionine = a ubiquinol + S-adenosyl-L-homocysteine + H(+). It carries out the reaction a 3-(all-trans-polyprenyl)benzene-1,2-diol + S-adenosyl-L-methionine = a 2-methoxy-6-(all-trans-polyprenyl)phenol + S-adenosyl-L-homocysteine + H(+). Its pathway is cofactor biosynthesis; ubiquinone biosynthesis. In terms of biological role, O-methyltransferase that catalyzes the 2 O-methylation steps in the ubiquinone biosynthetic pathway. In Aliivibrio fischeri (strain ATCC 700601 / ES114) (Vibrio fischeri), this protein is Ubiquinone biosynthesis O-methyltransferase.